The primary structure comprises 396 residues: Elongation factor Tu (396 aa).

The 197-residue stretch at 10–206 folds into the tr-type G domain; the sequence is KPHVNVGTIG…TLDEYIPEPE (197 aa). The G1 stretch occupies residues 19–26; the sequence is GHVDHGKT. 19 to 26 is a GTP binding site; that stretch reads GHVDHGKT. Thr-26 contributes to the Mg(2+) binding site. A G2 region spans residues 60 to 64; the sequence is GITIA. Residues 81–84 are G3; sequence DCPG. Residues 81 to 85 and 136 to 139 each bind GTP; these read DCPGH and NKAD. Residues 136–139 are G4; the sequence is NKAD. Residues 174–176 form a G5 region; the sequence is SAL.

The protein belongs to the TRAFAC class translation factor GTPase superfamily. Classic translation factor GTPase family. EF-Tu/EF-1A subfamily. As to quaternary structure, monomer.

It localises to the cytoplasm. The enzyme catalyses GTP + H2O = GDP + phosphate + H(+). In terms of biological role, GTP hydrolase that promotes the GTP-dependent binding of aminoacyl-tRNA to the A-site of ribosomes during protein biosynthesis. This chain is Elongation factor Tu, found in Alcanivorax borkumensis (strain ATCC 700651 / DSM 11573 / NCIMB 13689 / SK2).